A 447-amino-acid polypeptide reads, in one-letter code: Tubulin beta-2 chain (447 aa).

8 residues coordinate GTP: glutamine 11, glutamate 69, serine 138, glycine 142, threonine 143, glycine 144, asparagine 204, and asparagine 226. Residue glutamate 69 coordinates Mg(2+). The tract at residues 427-447 (DASISEGEEEYEEEQQLENEE) is disordered. Positions 432–447 (EGEEEYEEEQQLENEE) are enriched in acidic residues.

Belongs to the tubulin family. As to quaternary structure, dimer of alpha and beta chains. A typical microtubule is a hollow water-filled tube with an outer diameter of 25 nm and an inner diameter of 15 nM. Alpha-beta heterodimers associate head-to-tail to form protofilaments running lengthwise along the microtubule wall with the beta-tubulin subunit facing the microtubule plus end conferring a structural polarity. Microtubules usually have 13 protofilaments but different protofilament numbers can be found in some organisms and specialized cells. Requires Mg(2+) as cofactor.

It is found in the cytoplasm. It localises to the cytoskeleton. Its function is as follows. Tubulin is the major constituent of microtubules, a cylinder consisting of laterally associated linear protofilaments composed of alpha- and beta-tubulin heterodimers. Microtubules grow by the addition of GTP-tubulin dimers to the microtubule end, where a stabilizing cap forms. Below the cap, tubulin dimers are in GDP-bound state, owing to GTPase activity of alpha-tubulin. The chain is Tubulin beta-2 chain (TUB2) from Erysiphe pisi (Pea powdery mildew).